Here is a 460-residue protein sequence, read N- to C-terminus: UDP-N-acetylmuramoylalanine--D-glutamate ligase (460 aa).

120 to 126 provides a ligand contact to ATP; that stretch reads GSNGKTT.

Belongs to the MurCDEF family.

Its subcellular location is the cytoplasm. The catalysed reaction is UDP-N-acetyl-alpha-D-muramoyl-L-alanine + D-glutamate + ATP = UDP-N-acetyl-alpha-D-muramoyl-L-alanyl-D-glutamate + ADP + phosphate + H(+). It functions in the pathway cell wall biogenesis; peptidoglycan biosynthesis. Its function is as follows. Cell wall formation. Catalyzes the addition of glutamate to the nucleotide precursor UDP-N-acetylmuramoyl-L-alanine (UMA). The polypeptide is UDP-N-acetylmuramoylalanine--D-glutamate ligase (Lactobacillus delbrueckii subsp. bulgaricus (strain ATCC BAA-365 / Lb-18)).